The following is a 178-amino-acid chain: HTH-type transcriptional regulator SutR (178 aa).

One can recognise an HTH cro/C1-type domain in the interval 12-66; the sequence is LKQLRQQRGWSLSRLAEATGVSKAMLGQIERNESSPTVATLWKIATGLNVPFSTF. The H-T-H motif DNA-binding region spans 23–42; sequence LSRLAEATGVSKAMLGQIER. The Cupin type-2 domain maps to 105 to 171; the sequence is QMASGAISES…GGEQTVHFHS (67 aa).

In terms of biological role, regulates the expression of 12-16 transcription units involved in various steps of sulfur utilization. Represses expression of pfkB, fliZ, cysE, ydcO and its own expression. Activates expression of ypfN. Acts by binding to SutR boxes. This Escherichia coli (strain K12) protein is HTH-type transcriptional regulator SutR.